A 456-amino-acid chain; its full sequence is MTVTIVGSQLGDEGKGGIVDVYGDAVDVVVRYQGGDNAGHTVVHEGDEYKLSLVPSGAVRGKVGVLGNGCVVNPETLFEELDALRERGLTPDVRVAERAHAILPYHRVLDGIEEDVKSDDDLAAGTTGRGIGPTYEDKAGRRGVRIGDLLDAETLRARLEYVVPQKRALVEDVYNLEIGDDIDADAFDVEALFEQYREFGRRLDEEGMTVNCGEFLNEHLDNGDEIMFEGAQGTSIDIDHGIYPYVTSSNPTAGAAAVGTGVGPTVVGRGEVVGIVKAYLSRVGTGPLPTELGSVDGQTPNNGGRPDESDLATYIRDEGGEYGTVTGRPRRVGWLDMPMLRHAARANGFTGLAVNHLDVLAGLEEVKVGHAYTLDGEQLLTMPATTEQWADCEAEFRSFDGWPDVDWGAVADEGYEALPENARTYLDYIADELDAPIYAVGVGPGREETVVVESPL.

GTP is bound by residues 11–17 and 39–41; these read GDEGKGG and GHT. Aspartate 12 acts as the Proton acceptor in catalysis. 2 residues coordinate Mg(2+): aspartate 12 and glycine 39. Residues 12-15, 37-40, threonine 127, arginine 141, glutamine 232, threonine 247, and arginine 328 contribute to the IMP site; these read DEGK and NAGH. The active-site Proton donor is the histidine 40. 324-330 contributes to the substrate binding site; sequence TVTGRPR. GTP is bound by residues arginine 330, 356-358, and 441-443; these read HLD and GVG.

This sequence belongs to the adenylosuccinate synthetase family. As to quaternary structure, homodimer. Requires Mg(2+) as cofactor.

The protein resides in the cytoplasm. It catalyses the reaction IMP + L-aspartate + GTP = N(6)-(1,2-dicarboxyethyl)-AMP + GDP + phosphate + 2 H(+). Its pathway is purine metabolism; AMP biosynthesis via de novo pathway; AMP from IMP: step 1/2. Plays an important role in the de novo pathway of purine nucleotide biosynthesis. Catalyzes the first committed step in the biosynthesis of AMP from IMP. The polypeptide is Adenylosuccinate synthetase (Natronomonas pharaonis (strain ATCC 35678 / DSM 2160 / CIP 103997 / JCM 8858 / NBRC 14720 / NCIMB 2260 / Gabara) (Halobacterium pharaonis)).